The sequence spans 332 residues: 4-hydroxythreonine-4-phosphate dehydrogenase (332 aa).

2 residues coordinate substrate: histidine 136 and threonine 137. Residues histidine 166, histidine 211, and histidine 266 each coordinate a divalent metal cation. Lysine 274, asparagine 283, and arginine 292 together coordinate substrate.

This sequence belongs to the PdxA family. As to quaternary structure, homodimer. Requires Zn(2+) as cofactor. It depends on Mg(2+) as a cofactor. Co(2+) serves as cofactor.

The protein resides in the cytoplasm. It catalyses the reaction 4-(phosphooxy)-L-threonine + NAD(+) = 3-amino-2-oxopropyl phosphate + CO2 + NADH. Its pathway is cofactor biosynthesis; pyridoxine 5'-phosphate biosynthesis; pyridoxine 5'-phosphate from D-erythrose 4-phosphate: step 4/5. Its function is as follows. Catalyzes the NAD(P)-dependent oxidation of 4-(phosphooxy)-L-threonine (HTP) into 2-amino-3-oxo-4-(phosphooxy)butyric acid which spontaneously decarboxylates to form 3-amino-2-oxopropyl phosphate (AHAP). This chain is 4-hydroxythreonine-4-phosphate dehydrogenase, found in Wigglesworthia glossinidia brevipalpis.